We begin with the raw amino-acid sequence, 695 residues long: Nucleoprotein (695 aa).

Coiled coils occupy residues 316–341 (VNVG…RRHE) and 372–399 (QTLA…VEDQ). Disordered stretches follow at residues 423–458 (VQAR…SFVD), 483–515 (TSRE…TNPI), and 527–612 (PVQE…DTRA). Polar residues-rich tracts occupy residues 495–505 (RQSQDLNNSQG) and 537–552 (TTDS…SDNE). A PTAP/PSAP motif motif is present at residues 603-606 (PSAP).

This sequence belongs to the filoviruses nucleoprotein family. Homooligomer. Homomultimerizes to form the nucleocapsid. Binds to viral genomic RNA. Interacts with VP35 and VP30 to form the nucleocapsid. Also interacts with VP24 and VP40. In terms of processing, phosphorylated.

It localises to the virion. The protein resides in the host cytoplasm. Functionally, encapsidates the genome, protecting it from nucleases. The encapsidated genomic RNA is termed the nucleocapsid and serves as template for transcription and replication. During replication, encapsidation by NP is coupled to RNA synthesis and all replicative products are resistant to nucleases. This chain is Nucleoprotein (NP), found in Chlorocebus aethiops (Green monkey).